The primary structure comprises 253 residues: uncharacterized protein (253 aa).

The protein belongs to the MG439/MG440 family.

This is an uncharacterized protein from Mycoplasma pneumoniae (strain ATCC 29342 / M129 / Subtype 1) (Mycoplasmoides pneumoniae).